Here is a 166-residue protein sequence, read N- to C-terminus: MTIAVCPGSYDPVTAGHLDVIERSARFFDEVHVVVAVNAAKTPMFSEATRVDVIRRALDKAGCKNVTVSSTDGLITDYCKKVGATVIIKGLRQNGDYEAELGMALVNRKLAGIETLFLPADPILEHISSSIVKDVARHGGDVTGMVPDCVVPMLADALAEERQRKD.

Ser9 is a binding site for substrate. ATP contacts are provided by residues 9–10 (SY) and His17. Residues Lys41, Ile75, and Lys89 each contribute to the substrate site. Residues 90 to 92 (GLR), Glu100, and 124 to 130 (LEHISSS) each bind ATP.

It belongs to the bacterial CoaD family. In terms of assembly, homohexamer. Mg(2+) is required as a cofactor.

The protein localises to the cytoplasm. The enzyme catalyses (R)-4'-phosphopantetheine + ATP + H(+) = 3'-dephospho-CoA + diphosphate. It participates in cofactor biosynthesis; coenzyme A biosynthesis; CoA from (R)-pantothenate: step 4/5. Functionally, reversibly transfers an adenylyl group from ATP to 4'-phosphopantetheine, yielding dephospho-CoA (dPCoA) and pyrophosphate. This is Phosphopantetheine adenylyltransferase from Bifidobacterium longum (strain DJO10A).